Reading from the N-terminus, the 481-residue chain is Replication factor C large subunit (481 aa).

Residue glycine 43 to threonine 50 coordinates ATP. 2 stretches are compositionally biased toward basic and acidic residues: residues lysine 408–aspartate 433 and valine 441–alanine 457. The interval lysine 408–phenylalanine 481 is disordered. The segment covering alanine 471–phenylalanine 481 has biased composition (polar residues).

The protein belongs to the activator 1 small subunits family. RfcL subfamily. As to quaternary structure, heteromultimer composed of small subunits (RfcS) and large subunits (RfcL).

Its function is as follows. Part of the RFC clamp loader complex which loads the PCNA sliding clamp onto DNA. The protein is Replication factor C large subunit of Methanoregula boonei (strain DSM 21154 / JCM 14090 / 6A8).